The chain runs to 71 residues: Protein PSY2 (71 aa).

The N-terminal stretch at 1 to 20 (MSFGTRLLLFLILTLPLVTS) is a signal peptide. Positions 21-46 (SSPNTLHVSGIVKTGTTSRFLMMTIE) are excised as a propeptide. Y48 carries the post-translational modification Sulfotyrosine. The segment at 50–71 (DPSANTRHDPSVPTNAKADTTP) is disordered. Residues 61 to 71 (VPTNAKADTTP) show a composition bias toward polar residues. Position 62 is a 4-hydroxyproline (P62). The O-linked (Ara...) hydroxyproline glycan is linked to P62. A propeptide spanning residues 65-71 (AKADTTP) is cleaved from the precursor.

This sequence belongs to the sulfated-peptide plant hormone family. In terms of processing, the sulfation and the glycosylation are required for full activity.

It is found in the secreted. Its function is as follows. Promotes cellular proliferation and expansion. The polypeptide is Protein PSY2 (PSY2) (Arabidopsis thaliana (Mouse-ear cress)).